Here is a 478-residue protein sequence, read N- to C-terminus: PRAME family member 4 (478 aa).

Residues 99 to 126 form an LRR 1; degenerate repeat; that stretch reads RWKLQVLDLQDVCENFWMVWSEAMAHGC. The stretch at 181–205 is one LRR 2; degenerate repeat; sequence HLCCKKLKILGMPFRNIRSILKMVN. Residues 206–232 form an LRR 3; degenerate repeat; sequence LDCIQEVEVNCKWVLPILTQFTPYLGH. The stretch at 233–268 is one LRR 4; degenerate repeat; it reads MRNLQKLILSHMDVSRYVSPEQKKEIVTQFTTQFLK. 5 LRR repeats span residues 269-294, 295-326, 327-347, 351-378, and 379-403; these read LRCLQKLYMNSVSFLEGHLDQLLSCL, KTSLKFLTITNCVLLESDLKHLSQCPSISQLK, TLDLSGIRLTNYSLVPLQILL, AATLEYLDLDDCGIIDSQVNAILPALSR, and CFELNTFSFCGNPICMATLENLLSH.

Belongs to the PRAME family.

The polypeptide is PRAME family member 4 (Homo sapiens (Human)).